An 853-amino-acid chain; its full sequence is Auxin response factor 23 (853 aa).

The disordered stretch occupies residues 121–141 (KQQEDNGSTEEEVPSAPAAGH). Residues 149 to 251 (FCKTLTASDT…ELRVGVRRAM (103 aa)) constitute a DNA-binding region (TF-B3). 2 disordered regions span residues 422-471 (ESEP…NNTP) and 647-723 (PAKS…QGVS). Over residues 425–455 (PNGTQRTFQTQENATPKSGFGNSSELESAQK) the composition is skewed to polar residues. Residues 672 to 686 (EWRRPDVTEVEKCSD) are compositionally biased toward basic and acidic residues. A compositionally biased stretch (polar residues) spans 706–723 (PSSQQASRNMSCKSQGVS). Positions 725 to 809 (RSCKKVHKQG…HKIFIYTREE (85 aa)) constitute a PB1 domain. Residues 815–853 (PGTLNSRSEDSHANSMERGSVGREMRGCLSTSSLNSENC) are disordered. Positions 843 to 853 (LSTSSLNSENC) are enriched in polar residues.

Belongs to the ARF family. In terms of assembly, homodimers and heterodimers.

It is found in the nucleus. Functionally, auxin response factors (ARFs) are transcriptional factors that bind specifically to the DNA sequence 5'-TGTCTC-3' found in the auxin-responsive promoter elements (AuxREs). This chain is Auxin response factor 23 (ARF23), found in Oryza sativa subsp. indica (Rice).